A 702-amino-acid chain; its full sequence is Polyphosphate kinase (702 aa).

Asn55 is a binding site for ATP. Positions 389 and 419 each coordinate Mg(2+). The active-site Phosphohistidine intermediate is His449. ATP-binding residues include Tyr482, Arg578, and His606.

It belongs to the polyphosphate kinase 1 (PPK1) family. Mg(2+) is required as a cofactor. Post-translationally, an intermediate of this reaction is the autophosphorylated ppk in which a phosphate is covalently linked to a histidine residue through a N-P bond.

It catalyses the reaction [phosphate](n) + ATP = [phosphate](n+1) + ADP. Its function is as follows. Catalyzes the reversible transfer of the terminal phosphate of ATP to form a long-chain polyphosphate (polyP). This Bacillus anthracis protein is Polyphosphate kinase.